The primary structure comprises 112 residues: Inner membrane assembly complex subunit 17 (112 aa).

The N-terminal 24 residues, 1–24 (MLRKLPINFAKWTVKKVPVQQKRF), are a transit peptide targeting the mitochondrion. Residues 25–44 (NSQQKEISPHIMFYKNYARP) lie on the Mitochondrial matrix side of the membrane. The helical transmembrane segment at 45 to 62 (LGKVTLFALATYYGLEIV) threads the bilayer. Residues 63-112 (WWKLDASEQEAIKNSKLLICESSFSLLTFRRITEFRECEIKTRDLYDPEI) are Mitochondrial intermembrane-facing.

Belongs to the INA17 family. Component of the inner membrane assembly (INA) complex. Interacts with a subset of F(1)F(0)-ATP synthase subunits of the F(1)-domain and the peripheral stalk.

Its subcellular location is the mitochondrion inner membrane. Functionally, component of the INA complex (INAC) that promotes the biogenesis of mitochondrial F(1)F(0)-ATP synthase. INAC facilitates the assembly of the peripheral stalk and promotes the assembly of the catalytic F(1)-domain with the membrane-embedded F(0)-domain. The sequence is that of Inner membrane assembly complex subunit 17 from Schizosaccharomyces pombe (strain 972 / ATCC 24843) (Fission yeast).